Consider the following 545-residue polypeptide: Glucose-6-phosphate isomerase (545 aa).

The active-site Proton donor is Glu-353. Residues His-384 and Lys-510 contribute to the active site.

Belongs to the GPI family.

Its subcellular location is the cytoplasm. It carries out the reaction alpha-D-glucose 6-phosphate = beta-D-fructose 6-phosphate. It functions in the pathway carbohydrate biosynthesis; gluconeogenesis. The protein operates within carbohydrate degradation; glycolysis; D-glyceraldehyde 3-phosphate and glycerone phosphate from D-glucose: step 2/4. In terms of biological role, catalyzes the reversible isomerization of glucose-6-phosphate to fructose-6-phosphate. The chain is Glucose-6-phosphate isomerase from Aromatoleum aromaticum (strain DSM 19018 / LMG 30748 / EbN1) (Azoarcus sp. (strain EbN1)).